The sequence spans 525 residues: GMP synthase [glutamine-hydrolyzing] (525 aa).

Residues 8–207 (KILILDFGSQ…ALDICGCKAN (200 aa)) enclose the Glutamine amidotransferase type-1 domain. Cys-85 functions as the Nucleophile in the catalytic mechanism. Residues His-181 and Glu-183 contribute to the active site. The 193-residue stretch at 208-400 (WKPSSIIEDA…LGLPYNMLYR (193 aa)) folds into the GMPS ATP-PPase domain. Position 235–241 (235–241 (SGGVDSS)) interacts with ATP.

In terms of assembly, homodimer.

It catalyses the reaction XMP + L-glutamine + ATP + H2O = GMP + L-glutamate + AMP + diphosphate + 2 H(+). It functions in the pathway purine metabolism; GMP biosynthesis; GMP from XMP (L-Gln route): step 1/1. In terms of biological role, catalyzes the synthesis of GMP from XMP. The chain is GMP synthase [glutamine-hydrolyzing] from Shewanella frigidimarina (strain NCIMB 400).